Reading from the N-terminus, the 350-residue chain is Protein-glutamate methylesterase/protein-glutamine glutaminase 6 (350 aa).

The Response regulatory domain occupies 11–126; it reads RVLVVDDSAA…LAPVREELLE (116 aa). At Asp-62 the chain carries 4-aspartylphosphate. In terms of domain architecture, CheB-type methylesterase spans 150–347; it reads ELEPARVAVV…ARLVEFARDA (198 aa). Catalysis depends on residues Ser-162, His-189, and Asp-289.

Belongs to the CheB family. In terms of processing, phosphorylated by CheA. Phosphorylation of the N-terminal regulatory domain activates the methylesterase activity.

The protein localises to the cytoplasm. The enzyme catalyses [protein]-L-glutamate 5-O-methyl ester + H2O = L-glutamyl-[protein] + methanol + H(+). The catalysed reaction is L-glutaminyl-[protein] + H2O = L-glutamyl-[protein] + NH4(+). Involved in chemotaxis. Part of a chemotaxis signal transduction system that modulates chemotaxis in response to various stimuli. Catalyzes the demethylation of specific methylglutamate residues introduced into the chemoreceptors (methyl-accepting chemotaxis proteins or MCP) by CheR. Also mediates the irreversible deamidation of specific glutamine residues to glutamic acid. The sequence is that of Protein-glutamate methylesterase/protein-glutamine glutaminase 6 from Anaeromyxobacter dehalogenans (strain 2CP-C).